Reading from the N-terminus, the 141-residue chain is Large ribosomal subunit protein uL16m (141 aa).

The protein belongs to the universal ribosomal protein uL16 family.

It is found in the mitochondrion. The polypeptide is Large ribosomal subunit protein uL16m (RPL16) (Acanthamoeba castellanii (Amoeba)).